The chain runs to 602 residues: Cytokine-like nuclear factor N-PAC (602 aa).

Phosphoserine is present on residues S8 and S10. The 60-residue stretch at 22–81 folds into the PWWP domain; the sequence is PKDLIWAKMKGFTPWPGMIVDPPLDLLSQQRRANTKCVFFFGSRNFAWIEENNIKPFEGP. Residues 162 to 262 form a disordered region; that stretch reads GSPDEGDGLD…ASSTPTGRRR (101 aa). Composition is skewed to polar residues over residues 176–188, 204–217, and 224–233; these read ADSSASPVTSPAV, AATSVKSTKGSAKS, and SAQQSPSGPS. Phosphoserine is present on residues S224, S228, and S243. The dehydrogenase domain stretch occupies residues 309–602; the sequence is RDIVPSEQTF…SSAVFVRSRF (294 aa). Residues 319-333, T411, and R554 each bind NAD(+); that span reads GFLGLGMMGSTIVKD.

This sequence belongs to the HIBADH-related family. NP60 subfamily. Binds to mononucleosomes. Interacts with male-specific lethal (MSL) histone acetyltransferase complex at least composed of mof, msl-1, msl-2 and msl-3.

It is found in the chromosome. In terms of biological role, nucleosome-destabilizing factor that is recruited to genes during transcriptional activation and colocalizes with a subset of trimethylated 'Lys-36' histone H3 (H3K36me3)-enriched regions. Binds DNA (in vitro). Facilitates Pol II transcription through nucleosomes. Facilitates male-specific lethal (MSL) histone acetyltransferase complex targeting to active genes on the X chromosome. Stimulates the acetylation of 'Lys-56' of nucleosomal histone H3 (H3K56ac) by nej. May have oxidoreductase activity. In Drosophila melanogaster (Fruit fly), this protein is Cytokine-like nuclear factor N-PAC.